Reading from the N-terminus, the 286-residue chain is Phycobilisome 32.1 kDa linker polypeptide, phycocyanin-associated, rod (286 aa).

The PBS-linker domain maps to 2 to 180 (AITAAASRLG…LYRGYANSDR (179 aa)). The 53-residue stretch at 234-286 (DRVYRIEVTGVRSPGYPSVRRSSYAIIVPYERLSEKIQQIHKLGGKIVSITSA) folds into the CpcD-like domain.

Belongs to the phycobilisome linker protein family.

It localises to the cellular thylakoid membrane. Its function is as follows. Rod linker protein, associated with phycocyanin. Linker polypeptides determine the state of aggregation and the location of the disk-shaped phycobiliprotein units within the phycobilisome and modulate their spectroscopic properties in order to mediate a directed and optimal energy transfer. The polypeptide is Phycobilisome 32.1 kDa linker polypeptide, phycocyanin-associated, rod (cpcC) (Mastigocladus laminosus (Fischerella sp.)).